The sequence spans 148 residues: uncharacterized protein (148 aa).

Residues 8-148 (QVMQEPELKI…DGFLTLILRN (141 aa)) enclose the N-acetyltransferase domain.

This sequence belongs to the acetyltransferase family.

This is an uncharacterized protein from Bacillus subtilis (strain 168).